Here is a 291-residue protein sequence, read N- to C-terminus: Protease HtpX homolog (291 aa).

Transmembrane regions (helical) follow at residues 4 to 24 and 38 to 58; these read VILFLLTNFAVMLVLSVTARI and MGMLLVFAALIGFGGSFISLL. A Zn(2+)-binding site is contributed by histidine 144. Glutamate 145 is an active-site residue. Histidine 148 lines the Zn(2+) pocket. 2 helical membrane passes run 159-179 and 199-219; these read LIQGVLNTFVIFLSRIIAYAV and ISSIACEILFGILASIVVMFF. Position 224 (glutamate 224) interacts with Zn(2+).

The protein belongs to the peptidase M48B family. It depends on Zn(2+) as a cofactor.

It localises to the cell inner membrane. This is Protease HtpX homolog from Pelodictyon phaeoclathratiforme (strain DSM 5477 / BU-1).